We begin with the raw amino-acid sequence, 403 residues long: L-cysteine:1D-myo-inositol 2-amino-2-deoxy-alpha-D-glucopyranoside ligase (403 aa).

Position 43 (Cys43) interacts with Zn(2+). L-cysteinyl-5'-AMP-binding positions include 43-46 (CGIT), Thr58, and 81-83 (NTT). The short motif at 45–55 (ITPYDATHLGH) is the 'HIGH' region element. Positions 183–188 (ERGGDP) match the 'ERGGDP' region motif. Residue Trp223 participates in L-cysteinyl-5'-AMP binding. Cys227 serves as a coordination point for Zn(2+). 245-247 (GSD) contacts L-cysteinyl-5'-AMP. His252 contacts Zn(2+). Residue Val279 participates in L-cysteinyl-5'-AMP binding. The short motif at 285–289 (KMSKS) is the 'KMSKS' region element.

Belongs to the class-I aminoacyl-tRNA synthetase family. MshC subfamily. As to quaternary structure, monomer. It depends on Zn(2+) as a cofactor.

It carries out the reaction 1D-myo-inositol 2-amino-2-deoxy-alpha-D-glucopyranoside + L-cysteine + ATP = 1D-myo-inositol 2-(L-cysteinylamino)-2-deoxy-alpha-D-glucopyranoside + AMP + diphosphate + H(+). In terms of biological role, catalyzes the ATP-dependent condensation of GlcN-Ins and L-cysteine to form L-Cys-GlcN-Ins. The sequence is that of L-cysteine:1D-myo-inositol 2-amino-2-deoxy-alpha-D-glucopyranoside ligase from Thermobispora bispora (strain ATCC 19993 / DSM 43833 / CBS 139.67 / JCM 10125 / KCTC 9307 / NBRC 14880 / R51).